A 196-amino-acid chain; its full sequence is Large ribosomal subunit protein bL25 (196 aa).

This sequence belongs to the bacterial ribosomal protein bL25 family. CTC subfamily. As to quaternary structure, part of the 50S ribosomal subunit; part of the 5S rRNA/L5/L18/L25 subcomplex. Contacts the 5S rRNA. Binds to the 5S rRNA independently of L5 and L18.

This is one of the proteins that binds to the 5S RNA in the ribosome where it forms part of the central protuberance. In Bacteroides thetaiotaomicron (strain ATCC 29148 / DSM 2079 / JCM 5827 / CCUG 10774 / NCTC 10582 / VPI-5482 / E50), this protein is Large ribosomal subunit protein bL25.